The chain runs to 358 residues: MSVAPLKNDVFLRALLREPVPYTPIWLMRQAGRYLPEYNATRARAGSFMGLAQNPDYACEVTLQPLARYPLDAAILFSDILTVPHAMGLGLDFAPGEGPRFAHPVRDESDVAKLAVPDMDSLRYVFDAVRTIRRELDGRVPLIGFAGSPWTIACYMAEGRGSDDYRLIKSMLYGRPDLLHRILEINAEATRHYLNAQIDAGAQAVMLFDSWGGVLADGLFQQFSLAYTRRVVEGLTREREGRRVPVIVFTKGGGQWLEEIAACGCDAVGLDWTVNLGAARRRVTDAVALQGNLDPMTLFGGAQAVRAEARRTLDAFGPVGKGGHVFNLGHGISQYSPPEVVSELVDEVHTYSRALHAG.

Substrate is bound by residues 29-33 (RQAGR), Phe48, Asp79, Tyr155, Ser210, and His330.

It belongs to the uroporphyrinogen decarboxylase family. As to quaternary structure, homodimer.

It is found in the cytoplasm. The catalysed reaction is uroporphyrinogen III + 4 H(+) = coproporphyrinogen III + 4 CO2. It functions in the pathway porphyrin-containing compound metabolism; protoporphyrin-IX biosynthesis; coproporphyrinogen-III from 5-aminolevulinate: step 4/4. Catalyzes the decarboxylation of four acetate groups of uroporphyrinogen-III to yield coproporphyrinogen-III. This is Uroporphyrinogen decarboxylase from Bordetella pertussis (strain Tohama I / ATCC BAA-589 / NCTC 13251).